Here is a 325-residue protein sequence, read N- to C-terminus: 5-dehydro-2-deoxygluconokinase (325 aa).

This sequence belongs to the carbohydrate kinase PfkB family.

It carries out the reaction 5-dehydro-2-deoxy-D-gluconate + ATP = 6-phospho-5-dehydro-2-deoxy-D-gluconate + ADP + H(+). It participates in polyol metabolism; myo-inositol degradation into acetyl-CoA; acetyl-CoA from myo-inositol: step 5/7. Catalyzes the phosphorylation of 5-dehydro-2-deoxy-D-gluconate (2-deoxy-5-keto-D-gluconate or DKG) to 6-phospho-5-dehydro-2-deoxy-D-gluconate (DKGP). This chain is 5-dehydro-2-deoxygluconokinase, found in Listeria innocua serovar 6a (strain ATCC BAA-680 / CLIP 11262).